Here is a 156-residue protein sequence, read N- to C-terminus: uncharacterized protein (156 aa).

Disordered stretches follow at residues 22–64 and 81–156; these read KERV…VLKK and AARA…DENE. A compositionally biased stretch (acidic residues) spans 43–56; the sequence is PEEDGDHSDKEDEQ. A Phosphoserine modification is found at serine 50. Position 108 is an N6-acetyllysine (lysine 108). The span at 121–134 shows a compositional bias: basic and acidic residues; it reads TKEEDEINKQDSVK. Serine 148 is subject to Phosphoserine.

This is an uncharacterized protein from Bos taurus (Bovine).